A 173-amino-acid chain; its full sequence is Translation initiation factor IF-3 (173 aa).

The protein belongs to the IF-3 family. In terms of assembly, monomer.

The protein localises to the cytoplasm. Functionally, IF-3 binds to the 30S ribosomal subunit and shifts the equilibrium between 70S ribosomes and their 50S and 30S subunits in favor of the free subunits, thus enhancing the availability of 30S subunits on which protein synthesis initiation begins. In Enterococcus faecalis (strain ATCC 700802 / V583), this protein is Translation initiation factor IF-3.